A 156-amino-acid polypeptide reads, in one-letter code: Transcription elongation factor GreA (156 aa).

Residues 45–66 are a coiled coil; it reads NAEYHSAKEKQSFIEGRIKELE.

This sequence belongs to the GreA/GreB family.

In terms of biological role, necessary for efficient RNA polymerase transcription elongation past template-encoded arresting sites. The arresting sites in DNA have the property of trapping a certain fraction of elongating RNA polymerases that pass through, resulting in locked ternary complexes. Cleavage of the nascent transcript by cleavage factors such as GreA or GreB allows the resumption of elongation from the new 3'terminus. GreA releases sequences of 2 to 3 nucleotides. The sequence is that of Transcription elongation factor GreA from Jannaschia sp. (strain CCS1).